The sequence spans 977 residues: RNA-binding protein 15 (977 aa).

Basic and acidic residues-rich tracts occupy residues 1–10 (MRTAGRDPVP), 35–52 (RGDDLRRPATMKGKERSP), 59–72 (RGGEDSTSRGERSK), and 98–113 (LHLDKSSSRGGSREYD). Positions 1–167 (MRTAGRDPVP…SSAPGGGDGA (167 aa)) are disordered. At S109 the chain carries Phosphoserine. Positions 119–130 (SSSRLHSYSSPS) are enriched in low complexity. The span at 135 to 150 (SGGGESRSSSRGGGGE) shows a compositional bias: gly residues. Over residues 151–160 (SRSSGAASSA) the composition is skewed to low complexity. An RRM 1 domain is found at 170 to 252 (KTLKISELGS…RPLKIEAVYV (83 aa)). Residues S179, S208, and S210 each carry the phosphoserine modification. K246 is covalently cross-linked (Glycyl lysine isopeptide (Lys-Gly) (interchain with G-Cter in SUMO2)). Phosphoserine is present on residues S253, S257, and S259. Positions 256–298 (RSRSPLDKDTYPPSASVVGASVGGHRHPPGGGGGQRSLSPGGA) are disordered. Residue Y266 is modified to Phosphotyrosine. A phosphoserine mark is found at S292, S294, and S365. RRM domains lie at 374–451 (RTLF…YGKA) and 455–529 (TRLW…FADT). Residues K406, K420, and K445 each participate in a glycyl lysine isopeptide (Lys-Gly) (interchain with G-Cter in SUMO2) cross-link. K450 carries the post-translational modification N6-acetyllysine. Composition is skewed to basic and acidic residues over residues 555 to 581 (HRAPDPLRGARDRTPPLLYRDRDRDLY) and 613 to 661 (SLDR…ESDR). A disordered region spans residues 555 to 778 (HRAPDPLRGA…KQDGGTAPVA (224 aa)). At T568 the chain carries Phosphothreonine. At R578 the chain carries Asymmetric dimethylarginine; alternate; by PRMT1. Position 578 is an omega-N-methylarginine; alternate; by PRMT1 (R578). 6 positions are modified to phosphoserine: S622, S656, S670, S674, S700, and S741. Composition is skewed to basic and acidic residues over residues 673-728 (RSPE…AERD) and 741-750 (SPLKKEDRSD). K744 is covalently cross-linked (Glycyl lysine isopeptide (Lys-Gly) (interchain with G-Cter in SUMO2)). Residues 752–771 (SAPSTSTASSKLKSPSQKQD) are compositionally biased toward polar residues. 3 positions are modified to phosphoserine: S765, S767, and S781. An SPOC domain is found at 777-956 (VASASPKLCL…YLVMIIVRGF (180 aa)). The segment at 865–884 (GSSDSRSSSSSAASDTATST) is disordered. Residues 866–884 (SSDSRSSSSSAASDTATST) are compositionally biased toward low complexity. S935 bears the Phosphoserine mark.

This sequence belongs to the RRM Spen family. Component of the WMM complex, a N6-methyltransferase complex composed of a catalytic subcomplex, named MAC, and of an associated subcomplex, named MACOM. The MAC subcomplex is composed of METTL3 and METTL14. The MACOM subcomplex is composed of WTAP, ZC3H13, CBLL1/HAKAI, VIRMA, and, in some cases of RBM15 (RBM15 or RBM15B). Also a component of a MACOM-like complex, named WTAP complex, composed of WTAP, ZC3H13, CBLL1, VIRMA, RBM15, BCLAF1 and THRAP3. Interacts with RBPJ. Interacts (via SPOC domain) with SETD1B. Interacts with NXF1, the interaction is required to promote mRNA export. Interacts with SF3B1. In terms of assembly, (Microbial infection) Interacts with Epstein-Barr virus BSFL2/BMLF1. In terms of processing, methylated at Arg-578 by PRMT1, leading to promote ubiquitination by CNOT4 and subsequent degradation by the proteasome. Ubiquitinated by CNOT4 following methylation at Arg-578 by PRMT1.

Its subcellular location is the nucleus speckle. It localises to the nucleus. The protein resides in the nucleoplasm. It is found in the nucleus envelope. The protein localises to the nucleus membrane. Functionally, RNA-binding protein that acts as a key regulator of N6-methyladenosine (m6A) methylation of RNAs, thereby regulating different processes, such as hematopoietic cell homeostasis, alternative splicing of mRNAs and X chromosome inactivation mediated by Xist RNA. Associated component of the WMM complex, a complex that mediates N6-methyladenosine (m6A) methylation of RNAs, a modification that plays a role in the efficiency of mRNA splicing and RNA processing. Plays a key role in m6A methylation, possibly by binding target RNAs and recruiting the WMM complex. Involved in random X inactivation mediated by Xist RNA: acts by binding Xist RNA and recruiting the WMM complex, which mediates m6A methylation, leading to target YTHDC1 reader on Xist RNA and promoting transcription repression activity of Xist. Required for the development of multiple tissues, such as the maintenance of the homeostasis of long-term hematopoietic stem cells and for megakaryocyte (MK) and B-cell differentiation. Regulates megakaryocyte differentiation by regulating alternative splicing of genes important for megakaryocyte differentiation; probably regulates alternative splicing via m6A regulation. Required for placental vascular branching morphogenesis and embryonic development of the heart and spleen. Acts as a regulator of thrombopoietin response in hematopoietic stem cells by regulating alternative splicing of MPL. May also function as an mRNA export factor, stimulating export and expression of RTE-containing mRNAs which are present in many retrotransposons that require to be exported prior to splicing. High affinity binding of pre-mRNA to RBM15 may allow targeting of the mRNP to the export helicase DBP5 in a manner that is independent of splicing-mediated NXF1 deposition, resulting in export prior to splicing. May be implicated in HOX gene regulation. The polypeptide is RNA-binding protein 15 (Homo sapiens (Human)).